The sequence spans 502 residues: MTEKKYIVALDQGTTSSRAVVMDHDANIISVSQREFEQIYPKPGWVEHDPMEIWATQSSTLVEVLAKADISADQIAAIGITNQRETTIVWEKETGKPIYNAIVWQCRRTAEICEHLKRDGLEDYIRSNTGLVIDPYFSGTKVKWILDHVEGSRERARRGELLFGTVDTWLIWKMTQGRVHVTDYTNASRTMLFNIHTLDWDDKMLEVLDIPREMLPEVRRSSEVYGQTNIGGKGGTRIPISGIAGDQQAALFGQLCVKEGMAKNTYGTGCFMLMNTGEKAVKSENGLLTTIACGPTGEVNYALEGAVFMAGASIQWLRDEMKLINDAYDSEYFATKVQNTNGVYVVPAFTGLGAPYWDPYARGAIFGLTRGVNANHIIRATLESIAYQTRDVLEAMQADSGIRLHALRVDGGAVANNFLMQFQSDILGTRVERPEVREVTALGAAYLAGLAVGFWQNLDELQEKAVIEREFRPGIETTERNYRYAGWKKAVKRAMAWEEHDE.

Residue Thr-14 coordinates ADP. ATP-binding residues include Thr-14, Thr-15, and Ser-16. Thr-14 is a binding site for sn-glycerol 3-phosphate. Arg-18 serves as a coordination point for ADP. Sn-glycerol 3-phosphate-binding residues include Arg-84, Glu-85, Tyr-136, and Asp-246. Residues Arg-84, Glu-85, Tyr-136, Asp-246, and Gln-247 each coordinate glycerol. Positions 268 and 311 each coordinate ADP. ATP-binding residues include Thr-268, Gly-311, Gln-315, and Gly-412. Residues Gly-412 and Asn-416 each contribute to the ADP site.

The protein belongs to the FGGY kinase family. Homotetramer and homodimer (in equilibrium). Heterodimer with EIIA-Glc. Binds 1 zinc ion per glycerol kinase EIIA-Glc dimer. The zinc ion is important for dimerization.

It catalyses the reaction glycerol + ATP = sn-glycerol 3-phosphate + ADP + H(+). Its pathway is polyol metabolism; glycerol degradation via glycerol kinase pathway; sn-glycerol 3-phosphate from glycerol: step 1/1. With respect to regulation, activity of this regulatory enzyme is affected by several metabolites. Allosterically and non-competitively inhibited by fructose 1,6-bisphosphate (FBP) and unphosphorylated phosphocarrier protein EIIA-Glc (III-Glc), an integral component of the bacterial phosphotransferase (PTS) system. Key enzyme in the regulation of glycerol uptake and metabolism. Catalyzes the phosphorylation of glycerol to yield sn-glycerol 3-phosphate. The protein is Glycerol kinase of Escherichia coli O7:K1 (strain IAI39 / ExPEC).